A 396-amino-acid polypeptide reads, in one-letter code: Ubiquitin-like modifier-activating enzyme 5 (396 aa).

ATP-binding residues include Gly-76, Asp-97, Lys-120, Asn-143, and Asn-177. Cys-219 and Cys-222 together coordinate Zn(2+). Catalysis depends on Cys-243, which acts as the Glycyl thioester intermediate. Residues Cys-296 and Cys-301 each coordinate Zn(2+).

Belongs to the ubiquitin-activating E1 family. UBA5 subfamily.

In terms of biological role, E1-like enzyme which activates UFM1. The chain is Ubiquitin-like modifier-activating enzyme 5 from Drosophila ananassae (Fruit fly).